The sequence spans 873 residues: Tyrosine-protein kinase receptor TYRO3 (873 aa).

The first 28 residues, 1–28 (MELRRSMALPRLLLLGLWAAALRDGAVA), serve as a signal peptide directing secretion. 2 consecutive Ig-like C2-type domains span residues 29 to 116 (AGMK…KEES) and 127 to 208 (PYFT…ATVQ). Residues 29–416 (AGMKFTGSPI…QRQPPYGTSW (388 aa)) lie on the Extracellular side of the membrane. N-linked (GlcNAc...) asparagine glycosylation occurs at Asn51. 2 cysteine pairs are disulfide-bonded: Cys52–Cys105 and Cys148–Cys191. Residues Asn179, Asn184, Asn218, Asn228, Asn281, Asn353, and Asn367 are each glycosylated (N-linked (GlcNAc...) asparagine). Fibronectin type-III domains follow at residues 215–308 (PPLN…TLEL) and 310–403 (PSST…AQEV). Residues 417–437 (VPVALGILTALVTAVALALIL) traverse the membrane as a helical segment. The Cytoplasmic portion of the chain corresponds to 438-873 (LRKRRKETRF…ELETEGEKSC (436 aa)). In terms of domain architecture, Protein kinase spans 505–776 (FTLGRMLGKG…GVLRSQLEMI (272 aa)). Residues 511 to 519 (LGKGEFGSV) and Lys537 contribute to the ATP site. Catalysis depends on Asp642, which acts as the Proton acceptor. Tyr673 carries the post-translational modification Phosphotyrosine; by autocatalysis. Residues 845–873 (VEGERHPEGQEGENKSLLYELETEGEKSC) are disordered. Basic and acidic residues predominate over residues 847-858 (GERHPEGQEGEN).

It belongs to the protein kinase superfamily. Tyr protein kinase family. AXL/UFO subfamily. Post-translationally, autophosphorylated on tyrosine residues. Detected in embryonic retina (at protein level). detected in brain, retina, kidney and in retinal Mueller glia-like cells.

It localises to the cell membrane. It catalyses the reaction L-tyrosyl-[protein] + ATP = O-phospho-L-tyrosyl-[protein] + ADP + H(+). Its function is as follows. Receptor tyrosine kinase that transduces signals from the extracellular matrix into the cytoplasm by binding to several ligands. Regulates many physiological processes including cell survival, migration and differentiation. Ligand binding at the cell surface induces dimerization and autophosphorylation of TYRO3 on its intracellular domain that provides docking sites for downstream signaling molecules. Following activation by ligand, enhances PI3-kinase activity and activates the AKT survival pathway, including nuclear translocation of NF-kappa-B and up-regulation of transcription of NF-kappa-B-regulated genes. This Gallus gallus (Chicken) protein is Tyrosine-protein kinase receptor TYRO3 (TYRO3).